A 147-amino-acid chain; its full sequence is Hemoglobin subunit beta-2 (147 aa).

The 145-residue stretch at 3 to 147 (EWTDSERAII…VVSALGRQYH (145 aa)) folds into the Globin domain. H64 and H93 together coordinate heme b.

This sequence belongs to the globin family. Hb 3 is a heterotetramer of two alpha-2 and two beta-2 chains. As to expression, red blood cells.

Involved in oxygen transport from gills to the various peripheral tissues. The protein is Hemoglobin subunit beta-2 (hbb2) of Arctogadus glacialis (Arctic cod).